The following is a 406-amino-acid chain: Cyclin-dependent kinase 4 homolog (406 aa).

Residues 102–388 form the Protein kinase domain; it reads TFLFQALGKG…ARGALSHPFL (287 aa). ATP-binding positions include 108–116 and lysine 131; that span reads LGKGAYGNV. Aspartate 233 serves as the catalytic Proton acceptor. Mg(2+)-binding residues include asparagine 238 and aspartate 251.

Belongs to the protein kinase superfamily. CMGC Ser/Thr protein kinase family. CDC2/CDKX subfamily. Interacts with cyd-1; the interaction is likely involved in regulating cdk-4 activity. The cofactor is Mg(2+).

It carries out the reaction L-seryl-[protein] + ATP = O-phospho-L-seryl-[protein] + ADP + H(+). The catalysed reaction is L-threonyl-[protein] + ATP = O-phospho-L-threonyl-[protein] + ADP + H(+). Its function is as follows. Serine/threonine-protein kinase which, in association with cyclin D-like protein cyd-1, is required for the progression through the G1 phase of the cell cycle during postembryonic development by phosphorylating and inhibiting lin-35 and fzr-1. In complex with cyd-1, involved in sex determination during gonadogenesis by regulating the asymmetric division of the somatic gonadal precursor cell (SGP). This is Cyclin-dependent kinase 4 homolog from Caenorhabditis elegans.